A 238-amino-acid chain; its full sequence is Ribonuclease PH (238 aa).

Phosphate contacts are provided by residues Arg-86 and 124–126; that span reads GTR.

It belongs to the RNase PH family. As to quaternary structure, homohexameric ring arranged as a trimer of dimers.

The catalysed reaction is tRNA(n+1) + phosphate = tRNA(n) + a ribonucleoside 5'-diphosphate. Functionally, phosphorolytic 3'-5' exoribonuclease that plays an important role in tRNA 3'-end maturation. Removes nucleotide residues following the 3'-CCA terminus of tRNAs; can also add nucleotides to the ends of RNA molecules by using nucleoside diphosphates as substrates, but this may not be physiologically important. Probably plays a role in initiation of 16S rRNA degradation (leading to ribosome degradation) during starvation. The protein is Ribonuclease PH of Marinobacter nauticus (strain ATCC 700491 / DSM 11845 / VT8) (Marinobacter aquaeolei).